The primary structure comprises 585 residues: Cytochrome P450 monooxygenase AOL_s00215g278 (585 aa).

Residue cysteine 518 participates in heme binding.

It belongs to the cytochrome P450 family. Heme is required as a cofactor.

It participates in secondary metabolite biosynthesis; terpenoid biosynthesis. Cytochrome P450 monooxygenase; part of the gene cluster that mediates the biosynthesis of sesquiterpenyl epoxy-cyclohexenoids (SECs) such as anthrobotrisins and arthrosporols, metabolites that possess a novel hybrid carbon skeleton consisting of a polyketide-derived epoxycyclohexenol combined with a terpenoid-derived monocyclic sesquiterpenol substructure (PKS-PTS hybrid). The SEC pathway plays an important role for fungal soil colonization via decreasing fungal nematode-capturing ability. Within the pathway, the cytochrome P450 monooxygenase AOL_s00215g278 plays a role in the oxygenation of the phenol moiety, most likely in the epoxy formation. The pathway begins with the biosynthesis of 6-methylsalicylic acid (6-MSA), the first precursor of the polyketide-derived epoxycyclohexenol in arthrosporols, by the polyketide synthase (PKS) AOL_s00215g283 via condensation of 1 acetate and 3 malonate units. The 6-methylsalicylic acid decarboxylase AOL_s00215g281 then catalyzes the decarboxylation of 6-methylsalicylic acid to yield m-cresol. The cytochrome P450 monooxygenase AOL_s00215g282 further oxidizes m-cresol to yield toluquinol. With the assistance of the oxidoreductase AOL_s00215g277, the polyprenyl transferase AOL_s00215g276 catalyzes the farnesylation of toluquinol to produce farnesyl hydroquinone, the hybrid precursor for biosynthesis of SECs. Farnesyl hydroquinone undergoes epoxidation and then subsequent dehydrogenation to form farnesyl epoxy-quinone, the first and simplest SEC. The cytochrome P450 monooxygenase AOL_s00215g278 and the FAD-dependent monooxygenase AOL_s00215g279 might be involved in the oxygenation of the phenol moiety, most likely in the epoxy formation. The cytochrome P450 monooxygenases AOL_s00215g274 and AOL_s00215g280 are involved in specific regional ketone reductions at respectively C-4 and C-1 of farnesyl epoxy-quinone PubMed:33823587. This is Cytochrome P450 monooxygenase AOL_s00215g278 from Arthrobotrys oligospora (strain ATCC 24927 / CBS 115.81 / DSM 1491) (Nematode-trapping fungus).